The chain runs to 214 residues: MNIILMGLPGAGKGTQAERIVKEFDIPHISTGDMFRAAVKNETPLGLEAKSYMDKGHLVPDEVVIGIVRERLSMDDCAKGFLLDGFPRTVPQAEALTATVKELGREIDHVININVQREQLIERLTGRWICPVCGASYHTMFNPPKEAGVCDKDGGKLYQREDDKIEVVTQRLDVNIAQTQPLIDYYSAQELLRDIDGEQDIQVVFAEIKSLLRG.

Residue 10–15 participates in ATP binding; that stretch reads GAGKGT. Residues 30–59 form an NMP region; the sequence is STGDMFRAAVKNETPLGLEAKSYMDKGHLV. AMP contacts are provided by residues Thr31, Arg36, 57–59, 85–88, and Gln92; these read HLV and GFPR. Residues 126–163 form an LID region; that stretch reads GRWICPVCGASYHTMFNPPKEAGVCDKDGGKLYQREDD. Arg127 lines the ATP pocket. The Zn(2+) site is built by Cys130 and Cys133. 136–137 contributes to the ATP binding site; the sequence is SY. Cys150 and Asp153 together coordinate Zn(2+). 2 residues coordinate AMP: Arg160 and Arg171. Gln199 is a binding site for ATP.

This sequence belongs to the adenylate kinase family. Monomer.

It localises to the cytoplasm. The enzyme catalyses AMP + ATP = 2 ADP. It participates in purine metabolism; AMP biosynthesis via salvage pathway; AMP from ADP: step 1/1. Its function is as follows. Catalyzes the reversible transfer of the terminal phosphate group between ATP and AMP. Plays an important role in cellular energy homeostasis and in adenine nucleotide metabolism. In Brevibacillus brevis (strain 47 / JCM 6285 / NBRC 100599), this protein is Adenylate kinase.